The sequence spans 1425 residues: Death-associated protein kinase dapk-1 (1425 aa).

Residues 28–289 form the Protein kinase domain; the sequence is YEIETELGSG…VEECLQHPWI (262 aa). ATP is bound by residues 34 to 42 and Lys-57; that span reads LGSGQFAVV. Asp-155 functions as the Proton acceptor in the catalytic mechanism. 10 ANK repeats span residues 392–421, 425–454, 458–487, 491–520, 524–553, 557–586, 590–619, 623–652, 810–841, and 934–963; these read NGAT…NICA, NGDT…DVDS, TGET…RLDL, SGDT…PLHL, REET…PIDA, DGKT…DINH, HGDT…TVDS, NKKT…DVTL, GGYE…DPTE, and IGMK…ILDT. The Roc domain maps to 695–950; that stretch reads LDTSLRRIKL…MELAKCRTNI (256 aa). One can recognise a Death domain in the interval 1308–1389; it reads ELACLLDPPH…DARDALYRTV (82 aa).

The protein belongs to the protein kinase superfamily. CAMK Ser/Thr protein kinase family. DAP kinase subfamily. As to quaternary structure, interacts with ptrn-1. It depends on Mg(2+) as a cofactor. In terms of tissue distribution, expressed in epidermis, muscles and neurons.

The protein localises to the cytoplasm. Its subcellular location is the cytosol. The protein resides in the cytoskeleton. The catalysed reaction is L-seryl-[protein] + ATP = O-phospho-L-seryl-[protein] + ADP + H(+). It catalyses the reaction L-threonyl-[protein] + ATP = O-phospho-L-threonyl-[protein] + ADP + H(+). Functionally, negative regulator of epidermal barrier repair and innate immune responses to wounding. The role in epidermal tissue integrity and wound healing is established through the inhibition of epidermal microtubule stability, possibly via the negative regulation of the microtubule minus-end binding protein ptrn-1. In epidermis, prevents expression of specific unc-44 isoforms probably by promoting nuclear localization of pinn-1, which in turn may affect sydn-1-ssup-72-mediated regulation of alternative polyadenylation of unc-44 mRNA. Appears to act downstream of or in parallel to muscarinic signaling in the regulation of autophagy. The polypeptide is Death-associated protein kinase dapk-1 (Caenorhabditis elegans).